Reading from the N-terminus, the 424-residue chain is Tyrosine--tRNA ligase (424 aa).

Tyr-37 serves as a coordination point for L-tyrosine. The short motif at 42-51 is the 'HIGH' region element; that stretch reads PTADSLHLGH. Residues Tyr-175 and Gln-179 each coordinate L-tyrosine. A 'KMSKS' region motif is present at residues 235-239; it reads KFGKT. Residue Lys-238 participates in ATP binding. Residues 357–414 enclose the S4 RNA-binding domain; the sequence is ADLQQALVNAELVPSRGQARTMIGSNAVAINGEKQADPEYVFTDADRLFGRYTLLRRG.

Belongs to the class-I aminoacyl-tRNA synthetase family. TyrS type 1 subfamily. As to quaternary structure, homodimer.

Its subcellular location is the cytoplasm. It catalyses the reaction tRNA(Tyr) + L-tyrosine + ATP = L-tyrosyl-tRNA(Tyr) + AMP + diphosphate + H(+). Functionally, catalyzes the attachment of tyrosine to tRNA(Tyr) in a two-step reaction: tyrosine is first activated by ATP to form Tyr-AMP and then transferred to the acceptor end of tRNA(Tyr). The sequence is that of Tyrosine--tRNA ligase from Yersinia pestis bv. Antiqua (strain Antiqua).